We begin with the raw amino-acid sequence, 298 residues long: Urease accessory protein UreD (298 aa).

Belongs to the UreD family. In terms of assembly, ureD, UreF and UreG form a complex that acts as a GTP-hydrolysis-dependent molecular chaperone, activating the urease apoprotein by helping to assemble the nickel containing metallocenter of UreC. The UreE protein probably delivers the nickel.

It localises to the cytoplasm. Its function is as follows. Required for maturation of urease via the functional incorporation of the urease nickel metallocenter. The protein is Urease accessory protein UreD of Marinobacter nauticus (strain ATCC 700491 / DSM 11845 / VT8) (Marinobacter aquaeolei).